Consider the following 229-residue polypeptide: Peptidyl-tRNA hydrolase (229 aa).

TRNA is bound at residue tyrosine 17. Histidine 22 functions as the Proton acceptor in the catalytic mechanism. The tRNA site is built by phenylalanine 74, asparagine 76, and asparagine 122. Residues 194 to 229 are disordered; sequence AGKTTRPRKPVRQTANAEASNNSPEASATPQNKDNT. Residues 207-223 show a composition bias toward low complexity; the sequence is TANAEASNNSPEASATP.

The protein belongs to the PTH family. In terms of assembly, monomer.

The protein resides in the cytoplasm. It catalyses the reaction an N-acyl-L-alpha-aminoacyl-tRNA + H2O = an N-acyl-L-amino acid + a tRNA + H(+). Hydrolyzes ribosome-free peptidyl-tRNAs (with 1 or more amino acids incorporated), which drop off the ribosome during protein synthesis, or as a result of ribosome stalling. Its function is as follows. Catalyzes the release of premature peptidyl moieties from peptidyl-tRNA molecules trapped in stalled 50S ribosomal subunits, and thus maintains levels of free tRNAs and 50S ribosomes. The polypeptide is Peptidyl-tRNA hydrolase (Desulfovibrio desulfuricans (strain ATCC 27774 / DSM 6949 / MB)).